The primary structure comprises 145 residues: Meiotically up-regulated gene 124 protein (145 aa).

2 consecutive transmembrane segments (helical) span residues 18–38 (IILTIINSLVYLVNFISCPSI) and 95–115 (FAWSCALPCFVDSFFPSNFFL).

The protein localises to the membrane. Has a role in meiosis. In Schizosaccharomyces pombe (strain 972 / ATCC 24843) (Fission yeast), this protein is Meiotically up-regulated gene 124 protein (mug124).